The following is a 519-amino-acid chain: Arabinose import ATP-binding protein AraG 2 (519 aa).

ABC transporter domains are found at residues leucine 29–arginine 264 and arginine 264–leucine 515. Glycine 61 to serine 68 contributes to the ATP binding site.

This sequence belongs to the ABC transporter superfamily. Arabinose importer (TC 3.A.1.2.2) family. In terms of assembly, the complex is composed of two ATP-binding proteins (AraG), two transmembrane proteins (AraH) and a solute-binding protein (AraF).

Its subcellular location is the cell inner membrane. It catalyses the reaction L-arabinose(out) + ATP + H2O = L-arabinose(in) + ADP + phosphate + H(+). Part of the ABC transporter complex AraFGH involved in arabinose import. Responsible for energy coupling to the transport system. The polypeptide is Arabinose import ATP-binding protein AraG 2 (Burkholderia ambifaria (strain ATCC BAA-244 / DSM 16087 / CCUG 44356 / LMG 19182 / AMMD) (Burkholderia cepacia (strain AMMD))).